A 177-amino-acid chain; its full sequence is Small ribosomal subunit protein bS21m (177 aa).

The N-terminal 17 residues, Met-1–Phe-17, are a transit peptide targeting the mitochondrion.

The protein belongs to the bacterial ribosomal protein bS21 family. In terms of assembly, component of the mitochondrial small ribosomal subunit (mt-SSU). Mature yeast 74S mitochondrial ribosomes consist of a small (37S) and a large (54S) subunit. The 37S small subunit contains a 15S ribosomal RNA (15S mt-rRNA) and 34 different proteins. The 54S large subunit contains a 21S rRNA (21S mt-rRNA) and 46 different proteins.

It localises to the mitochondrion. Its function is as follows. Component of the mitochondrial ribosome (mitoribosome), a dedicated translation machinery responsible for the synthesis of mitochondrial genome-encoded proteins, including at least some of the essential transmembrane subunits of the mitochondrial respiratory chain. The mitoribosomes are attached to the mitochondrial inner membrane and translation products are cotranslationally integrated into the membrane. In Saccharomyces cerevisiae (strain ATCC 204508 / S288c) (Baker's yeast), this protein is Small ribosomal subunit protein bS21m (MRP21).